A 752-amino-acid chain; its full sequence is Endo-1,4-beta-xylanase 3 (752 aa).

Positions 1–22 (MEKNTNTNHTSDDNNDKNHTNE) are disordered. Over residues 10–22 (TSDDNNDKNHTNE) the composition is skewed to basic and acidic residues. CBM-cenC domains follow at residues 26 to 163 (KIIL…EGPP) and 197 to 344 (NIVE…VQGP). Residues 397-692 (FPYIVKVKQT…NEAGKRFLEV (296 aa)) enclose the GH10 domain. E526 acts as the Proton donor in catalysis. E627 functions as the Nucleophile in the catalytic mechanism.

The protein belongs to the glycosyl hydrolase 10 (cellulase F) family. In terms of tissue distribution, confined to immature xylems.

It catalyses the reaction Endohydrolysis of (1-&gt;4)-beta-D-xylosidic linkages in xylans.. It functions in the pathway glycan degradation; xylan degradation. Its function is as follows. Binds to and hydrolyzes insoluble and soluble xylan substrates. This Arabidopsis thaliana (Mouse-ear cress) protein is Endo-1,4-beta-xylanase 3.